The sequence spans 373 residues: Queuine tRNA-ribosyltransferase (373 aa).

Asp90 functions as the Proton acceptor in the catalytic mechanism. Residues 90 to 94, Asp144, Gln193, and Gly220 each bind substrate; that span reads DSGGF. The RNA binding stretch occupies residues 251–257; that stretch reads GVGTPED. Residue Asp270 is the Nucleophile of the active site. The segment at 275–279 is RNA binding; important for wobble base 34 recognition; it reads TRNAR. Residues Cys308, Cys310, Cys313, and His339 each contribute to the Zn(2+) site.

This sequence belongs to the queuine tRNA-ribosyltransferase family. Homodimer. Within each dimer, one monomer is responsible for RNA recognition and catalysis, while the other monomer binds to the replacement base PreQ1. Zn(2+) is required as a cofactor.

The enzyme catalyses 7-aminomethyl-7-carbaguanine + guanosine(34) in tRNA = 7-aminomethyl-7-carbaguanosine(34) in tRNA + guanine. It participates in tRNA modification; tRNA-queuosine biosynthesis. Functionally, catalyzes the base-exchange of a guanine (G) residue with the queuine precursor 7-aminomethyl-7-deazaguanine (PreQ1) at position 34 (anticodon wobble position) in tRNAs with GU(N) anticodons (tRNA-Asp, -Asn, -His and -Tyr). Catalysis occurs through a double-displacement mechanism. The nucleophile active site attacks the C1' of nucleotide 34 to detach the guanine base from the RNA, forming a covalent enzyme-RNA intermediate. The proton acceptor active site deprotonates the incoming PreQ1, allowing a nucleophilic attack on the C1' of the ribose to form the product. After dissociation, two additional enzymatic reactions on the tRNA convert PreQ1 to queuine (Q), resulting in the hypermodified nucleoside queuosine (7-(((4,5-cis-dihydroxy-2-cyclopenten-1-yl)amino)methyl)-7-deazaguanosine). In Campylobacter jejuni subsp. jejuni serotype O:23/36 (strain 81-176), this protein is Queuine tRNA-ribosyltransferase.